We begin with the raw amino-acid sequence, 153 residues long: MKEPSAVHGRILALDFGTRRIGLAVSDPLGITAQGLQTLLRKNKRTDLAALRSVIEQNEIREIVVGLPLRLSGADSSSTEKAREFAAWLEKEFALPVHMWDERFTSVEANRVLRESEMSIKKRGEAVDRLSAVLILQAFLERRGIDREEPLSS.

The protein belongs to the YqgF nuclease family.

Its subcellular location is the cytoplasm. Its function is as follows. Could be a nuclease involved in processing of the 5'-end of pre-16S rRNA. The polypeptide is Putative pre-16S rRNA nuclease (Koribacter versatilis (strain Ellin345)).